Consider the following 575-residue polypeptide: MPVSIEELKALQVQKKEASKPKFISKAKRAEMAAKAKQIQKNTTSEETTLKDIRSTTDLKRSVVQETVETTKPLPSKPKPKSTSGKFSFDWSAADDTSKAYQPSYSIDSGDGQVPKRQKRDLEDAHWSDKPVESMTSRDWRIFKEDYSIVTKGGGNIPNPLRSWNECKEIPGIVRDTISRMGYKEPTPIQRAAIPIALGIRDVIGVAETGSGKTASFLIPLISYICELPKLDERSKVNGPYGLILAPTRELAMQIKDEAVKFCAPLGFKVVSVVGGYSAQEQALAVQEGAELIVATPGRLLDVIDRRLLVLNQCCYVVMDEADRMVDMGFEEQVQKVLASLPSSNAKPDSDEAENLAAVSTRRYRQTMMYTATMPVAIEKLAKKYLRRPGIVTIGSAGQAGSTVTQLVEFLNTDEKRKRRLLDIISKRQYRPPIVVFLNYKRDCEAVSDALVAAGWRTAIIHGGKQQEQREQAVQHLKRGAVDVLVATDVAGRGLDIPNVSLVVNFQMANNIESYTHRIGRTGRAGKRGTAVTFLGQEDDDVLFELKQMISRSEASPNNQELSRHPAARMKKLQQ.

Positions 35 to 130 are disordered; the sequence is KAKQIQKNTT…DLEDAHWSDK (96 aa). 2 stretches are compositionally biased toward basic and acidic residues: residues 48 to 63 and 120 to 130; these read TTLKDIRSTTDLKRSV and RDLEDAHWSDK. A Q motif motif is present at residues 163-191; sequence SWNECKEIPGIVRDTISRMGYKEPTPIQR. The 199-residue stretch at 194–392 folds into the Helicase ATP-binding domain; that stretch reads IPIALGIRDV…KKYLRRPGIV (199 aa). 207 to 214 is an ATP binding site; it reads AETGSGKT. The DEAD box signature appears at 320–323; sequence DEAD. One can recognise a Helicase C-terminal domain in the interval 403–565; the sequence is TVTQLVEFLN…SPNNQELSRH (163 aa). The span at 552 to 561 shows a compositional bias: polar residues; that stretch reads RSEASPNNQE. The tract at residues 552 to 575 is disordered; it reads RSEASPNNQELSRHPAARMKKLQQ. Over residues 566–575 the composition is skewed to basic residues; the sequence is PAARMKKLQQ.

The protein belongs to the DEAD box helicase family. DDX23/PRP28 subfamily. Component of the U5 snRNP complex.

It is found in the cytoplasm. Its subcellular location is the nucleus. It carries out the reaction ATP + H2O = ADP + phosphate + H(+). ATP-dependent RNA helicase involved in mRNA splicing. May destabilize the U1/5'-splice site duplex to permit an effective competition for the 5'-splice site by the U6 snRNA, resulting in the switch between U1 and U6 at the 5'-splice site. May also act to unwind the U4/U6 base-pairing interaction in the U4/U6/U5 snRNP, facilitating the first covalent step of splicing. The chain is Pre-mRNA-splicing ATP-dependent RNA helicase PRP28 (PRP28) from Yarrowia lipolytica (strain CLIB 122 / E 150) (Yeast).